Here is a 205-residue protein sequence, read N- to C-terminus: Holliday junction branch migration complex subunit RuvA (205 aa).

The domain I stretch occupies residues 1-67; that stretch reads MIGWLKGDVQ…ADNLQLFGFL (67 aa). The interval 68–146 is domain II; that stretch reads QLAERDLFRE…DSVASTGPER (79 aa). The tract at residues 147–155 is flexible linker; it reads NQLDPVAPD. Residues 155–205 form a domain III region; it reads DLIATLETLGFETHEIRDALQRLNGMGGPQDGDDDDAWLRACIKLMSSTDP.

This sequence belongs to the RuvA family. As to quaternary structure, homotetramer. Forms an RuvA(8)-RuvB(12)-Holliday junction (HJ) complex. HJ DNA is sandwiched between 2 RuvA tetramers; dsDNA enters through RuvA and exits via RuvB. An RuvB hexamer assembles on each DNA strand where it exits the tetramer. Each RuvB hexamer is contacted by two RuvA subunits (via domain III) on 2 adjacent RuvB subunits; this complex drives branch migration. In the full resolvosome a probable DNA-RuvA(4)-RuvB(12)-RuvC(2) complex forms which resolves the HJ.

The protein localises to the cytoplasm. Its function is as follows. The RuvA-RuvB-RuvC complex processes Holliday junction (HJ) DNA during genetic recombination and DNA repair, while the RuvA-RuvB complex plays an important role in the rescue of blocked DNA replication forks via replication fork reversal (RFR). RuvA specifically binds to HJ cruciform DNA, conferring on it an open structure. The RuvB hexamer acts as an ATP-dependent pump, pulling dsDNA into and through the RuvAB complex. HJ branch migration allows RuvC to scan DNA until it finds its consensus sequence, where it cleaves and resolves the cruciform DNA. This chain is Holliday junction branch migration complex subunit RuvA, found in Parasynechococcus marenigrum (strain WH8102).